Here is a 211-residue protein sequence, read N- to C-terminus: Arginine exporter protein ArgO (211 aa).

6 helical membrane-spanning segments follow: residues 1 to 21, 37 to 57, 68 to 88, 111 to 131, 147 to 167, and 179 to 199; these read MISY…PLGP, LMIA…GIFG, LLAL…FGAL, IIAT…DTFV, WFAL…ALLA, and AQRI…FQLA.

This sequence belongs to the LysE/ArgO transporter (TC 2.A.75) family.

The protein localises to the cell inner membrane. It carries out the reaction L-arginine(in) = L-arginine(out). Its function is as follows. Involved in the export of arginine. Important to control the intracellular level of arginine and the correct balance between arginine and lysine. In Salmonella paratyphi C (strain RKS4594), this protein is Arginine exporter protein ArgO.